Reading from the N-terminus, the 72-residue chain is uncharacterized protein (72 aa).

Positions 51–72 (AKGGRQKGEVVGVDDQCKEHKE) are disordered.

The protein belongs to the YiiE family.

This is an uncharacterized protein from Escherichia coli O157:H7.